The chain runs to 349 residues: tRNA uridine(34) hydroxylase (349 aa).

One can recognise a Rhodanese domain in the interval 146 to 240 (DDPDAVFIDM…YARRAREQGL (95 aa)). The active-site Cysteine persulfide intermediate is the cysteine 200. Residues 316–328 (EEQRRRRAGRENG) show a composition bias toward basic and acidic residues. A disordered region spans residues 316-349 (EEQRRRRAGRENGNKIFNKSRGRLNTKLGIPDPE).

Belongs to the TrhO family.

It carries out the reaction uridine(34) in tRNA + AH2 + O2 = 5-hydroxyuridine(34) in tRNA + A + H2O. Its function is as follows. Catalyzes oxygen-dependent 5-hydroxyuridine (ho5U) modification at position 34 in tRNAs. The protein is tRNA uridine(34) hydroxylase of Enterobacter sp. (strain 638).